The primary structure comprises 89 residues: Small ribosomal subunit protein bS20 (89 aa).

A disordered region spans residues 1 to 28 (MTLANIKSAKKRAIQSEKRRQHNASQRS).

It belongs to the bacterial ribosomal protein bS20 family.

Functionally, binds directly to 16S ribosomal RNA. The protein is Small ribosomal subunit protein bS20 of Pasteurella multocida (strain Pm70).